The chain runs to 343 residues: Sulfate/thiosulfate import ATP-binding protein CysA (343 aa).

Residues 3 to 237 form the ABC transporter domain; that stretch reads IRISHLRKQF…PASPFVYSFV (235 aa). 35-42 contacts ATP; sequence GPSGSGKT.

It belongs to the ABC transporter superfamily. Sulfate/tungstate importer (TC 3.A.1.6) family. As to quaternary structure, the complex is composed of two ATP-binding proteins (CysA), two transmembrane proteins (CysT and CysW) and a solute-binding protein (CysP).

Its subcellular location is the cell inner membrane. The catalysed reaction is sulfate(out) + ATP + H2O = sulfate(in) + ADP + phosphate + H(+). The enzyme catalyses thiosulfate(out) + ATP + H2O = thiosulfate(in) + ADP + phosphate + H(+). Part of the ABC transporter complex CysAWTP involved in sulfate/thiosulfate import. Responsible for energy coupling to the transport system. The sequence is that of Sulfate/thiosulfate import ATP-binding protein CysA from Xanthomonas campestris pv. campestris (strain ATCC 33913 / DSM 3586 / NCPPB 528 / LMG 568 / P 25).